The primary structure comprises 98 residues: NADH-ubiquinone oxidoreductase chain 4L (98 aa).

3 consecutive transmembrane segments (helical) span residues Met-1 to Met-21, Ser-29 to Leu-49, and Ile-61 to Val-81.

It belongs to the complex I subunit 4L family. As to quaternary structure, core subunit of respiratory chain NADH dehydrogenase (Complex I) which is composed of 45 different subunits.

It localises to the mitochondrion inner membrane. It carries out the reaction a ubiquinone + NADH + 5 H(+)(in) = a ubiquinol + NAD(+) + 4 H(+)(out). Functionally, core subunit of the mitochondrial membrane respiratory chain NADH dehydrogenase (Complex I) which catalyzes electron transfer from NADH through the respiratory chain, using ubiquinone as an electron acceptor. Part of the enzyme membrane arm which is embedded in the lipid bilayer and involved in proton translocation. The polypeptide is NADH-ubiquinone oxidoreductase chain 4L (MT-ND4L) (Ectophylla alba (White bat)).